The following is an 852-amino-acid chain: Mannosyl-oligosaccharide glucosidase GCS1 (852 aa).

The segment at 1-31 (MTGASRRSARGRIKSSSLSPGSDEGSAYPPS) is disordered. Over 1-51 (MTGASRRSARGRIKSSSLSPGSDEGSAYPPSIRRGKGKELVSIGAFKTNLK) the chain is Cytoplasmic. The Endoplasmic reticulum targeting motif lies at 6-12 (RRSARGR). Over residues 15 to 26 (SSSLSPGSDEGS) the composition is skewed to low complexity. Residues 52–72 (ILVGLIILGIIVIYFVINRLV) traverse the membrane as a helical; Signal-anchor for type II membrane protein segment. Residues 73 to 852 (RHGLLFDESQ…LIMSEDYPIF (780 aa)) lie on the Lumenal side of the membrane. The segment at 91 to 150 (PAPKVMDLSMFQGEHKESLYWGTYRPHVYFGVRARTPLSLVAGLMWLGVKDEMYVMRHFC) is required for endoplasmic reticulum targeting. N-linked (GlcNAc...) asparagine glycans are attached at residues Asn282, Asn552, and Asn570. The span at 574-583 (QELNPKTLSS) shows a compositional bias: polar residues. The tract at residues 574–593 (QELNPKTLSSGLDDYPRASH) is disordered. The Proton donor role is filled by Asp586. Residues Asn633, Asn662, and Asn730 are each glycosylated (N-linked (GlcNAc...) asparagine). The active-site Proton acceptor is the Glu819.

This sequence belongs to the glycosyl hydrolase 63 family. In terms of tissue distribution, constitutively expressed in roots, stems, leaves, flowers and siliques.

It is found in the endoplasmic reticulum membrane. The catalysed reaction is N(4)-(alpha-D-Glc-(1-&gt;2)-alpha-D-Glc-(1-&gt;3)-alpha-D-Glc-(1-&gt;3)-alpha-D-Man-(1-&gt;2)-alpha-D-Man-(1-&gt;2)-alpha-D-Man-(1-&gt;3)-[alpha-D-Man-(1-&gt;2)-alpha-D-Man-(1-&gt;3)-[alpha-D-Man-(1-&gt;2)-alpha-D-Man-(1-&gt;6)]-alpha-D-Man-(1-&gt;6)]-beta-D-Man-(1-&gt;4)-beta-D-GlcNAc-(1-&gt;4)-beta-D-GlcNAc)-L-asparaginyl-[protein] + H2O = N(4)-(alpha-D-Glc-(1-&gt;3)-alpha-D-Glc-(1-&gt;3)-alpha-D-Man-(1-&gt;2)-alpha-D-Man-(1-&gt;2)-alpha-D-Man-(1-&gt;3)-[alpha-D-Man-(1-&gt;2)-alpha-D-Man-(1-&gt;3)-[alpha-D-Man-(1-&gt;2)-alpha-D-Man-(1-&gt;6)]-alpha-D-Man-(1-&gt;6)]-beta-D-Man-(1-&gt;4)-beta-D-GlcNAc-(1-&gt;4)-beta-D-GlcNAc)-L-asparaginyl-[protein] + beta-D-glucose. It participates in glycan metabolism; N-glycan degradation. In terms of biological role, cleaves the distal alpha 1,2-linked glucose residue from the Glc(3)Man(9)GlcNAc(2) oligosaccharide precursor. Required for the accumulation of seed storage proteins, the formation of protein bodies, cell differentiation, cellulose biosynthesis and organization (in cell walls), cell shape determination and organization (e.g. epidermal cells), and embryo development. Involved in root development. This Arabidopsis thaliana (Mouse-ear cress) protein is Mannosyl-oligosaccharide glucosidase GCS1 (GCS1).